The primary structure comprises 272 residues: GPN-loop GTPase 3 (272 aa).

Position 12 to 17 (12 to 17 (GAGKST)) interacts with GTP. Positions 69-71 (GPN) match the Gly-Pro-Asn (GPN)-loop; involved in dimer interface motif. Position 172-175 (172-175 (SKMD)) interacts with GTP. The disordered stretch occupies residues 253–272 (QYGEDEEPKVPKDMDDGDFD).

The protein belongs to the GPN-loop GTPase family. In terms of assembly, heterodimers with GPN1 or GPN2. Binds to RNA polymerase II (RNAPII).

Its function is as follows. Small GTPase required for proper nuclear import of RNA polymerase II and III (RNAPII and RNAPIII). May act at an RNAP assembly step prior to nuclear import. This chain is GPN-loop GTPase 3, found in Cryptococcus neoformans var. neoformans serotype D (strain JEC21 / ATCC MYA-565) (Filobasidiella neoformans).